Reading from the N-terminus, the 419-residue chain is tRNA modification GTPase MnmE (419 aa).

R20, E76, and R115 together coordinate (6S)-5-formyl-5,6,7,8-tetrahydrofolate. One can recognise a TrmE-type G domain in the interval G211–R348. A K(+)-binding site is contributed by N221. Residues N221–T226, S240–T246, and D265–G268 each bind GTP. Mg(2+) is bound at residue S225. Positions 240, 242, and 245 each coordinate K(+). T246 contributes to the Mg(2+) binding site. K419 contributes to the (6S)-5-formyl-5,6,7,8-tetrahydrofolate binding site.

The protein belongs to the TRAFAC class TrmE-Era-EngA-EngB-Septin-like GTPase superfamily. TrmE GTPase family. Homodimer. Heterotetramer of two MnmE and two MnmG subunits. Requires K(+) as cofactor.

Its subcellular location is the cytoplasm. In terms of biological role, exhibits a very high intrinsic GTPase hydrolysis rate. Involved in the addition of a carboxymethylaminomethyl (cmnm) group at the wobble position (U34) of certain tRNAs, forming tRNA-cmnm(5)s(2)U34. In Paracoccus denitrificans (strain Pd 1222), this protein is tRNA modification GTPase MnmE.